Consider the following 427-residue polypeptide: Gamma-glutamyl phosphate reductase (427 aa).

It belongs to the gamma-glutamyl phosphate reductase family.

It is found in the cytoplasm. It catalyses the reaction L-glutamate 5-semialdehyde + phosphate + NADP(+) = L-glutamyl 5-phosphate + NADPH + H(+). It participates in amino-acid biosynthesis; L-proline biosynthesis; L-glutamate 5-semialdehyde from L-glutamate: step 2/2. In terms of biological role, catalyzes the NADPH-dependent reduction of L-glutamate 5-phosphate into L-glutamate 5-semialdehyde and phosphate. The product spontaneously undergoes cyclization to form 1-pyrroline-5-carboxylate. This Brucella ovis (strain ATCC 25840 / 63/290 / NCTC 10512) protein is Gamma-glutamyl phosphate reductase.